Consider the following 322-residue polypeptide: Putative HTH-type transcriptional regulatory protein rrnAC2519 (322 aa).

An HTH cro/C1-type domain is found at L132 to L189. A DNA-binding region (H-T-H motif) is located at residues L143–D162.

The protein is Putative HTH-type transcriptional regulatory protein rrnAC2519 of Haloarcula marismortui (strain ATCC 43049 / DSM 3752 / JCM 8966 / VKM B-1809) (Halobacterium marismortui).